The primary structure comprises 354 residues: Replication-associated protein (354 aa).

A CRESS-DNA virus Rep endonuclease domain is found at 11-114; that stretch reads LHRNANTFLT…PLAVFERGTF (104 aa). An RCR-1 motif is present at residues 18–21; it reads FLTY. A divalent metal cation is bound by residues E52, H60, and H62. The RCR-2 motif lies at 60-62; sequence HLH. Y100 serves as the catalytic For DNA cleavage activity. The RCR-3 motif lies at 100-103; sequence YILK. E104 contributes to the a divalent metal cation binding site. An oligomerization region spans residues 174–186; sequence SANKLFPDIQEEF. 228–235 contacts ATP; that stretch reads GPTRTGKS. The tract at residues 251-269 is transactivation; the sequence is VDWSSYNEDAIYNIVDDIP. The Nuclear localization signal signature appears at 291-302; the sequence is KYGKKKKVQMKS.

It belongs to the geminiviridae Rep protein family. As to quaternary structure, homooligomer. Rep binds to repeated DNA motifs (iterons). Forms the O-complex, which is a Rep-DNA complex involved in the initiation of RCR. Part of the C- and V-complexes which are RepA-Rep-DNA complexes involved in the c-sense and v-sense transcription. The cofactor is Mg(2+). Requires Mn(2+) as cofactor.

Its subcellular location is the host nucleus. Functionally, essential for the replication of viral ssDNA. The closed circular ssDNA genome is first converted to a superhelical dsDNA. Rep binds a specific region at the genome origin of replication. It introduces an endonucleolytic nick within the conserved sequence 5'-TAATATTAC-3' in the intergenic region of the genome present in all geminiviruses, thereby initiating the rolling circle replication (RCR). Following cleavage, binds covalently to the 5'-phosphate of DNA as a tyrosyl ester. The cleavage gives rise to a free 3'-OH that serves as a primer for the cellular DNA polymerase. The polymerase synthesizes the (+) strand DNA by rolling circle mechanism. After one round of replication, a Rep-catalyzed nucleotidyl transfer reaction releases a circular single-stranded virus genome, thereby terminating the replication. Displays origin-specific DNA cleavage, nucleotidyl transferase, ATPase and helicase activities. Acts as an inhibitor of C-sense gene transcription. In Avena sativa (Oat), this protein is Replication-associated protein.